Reading from the N-terminus, the 112-residue chain is uncharacterized protein (112 aa).

Transmembrane regions (helical) follow at residues 44–63 (VITG…LHSL) and 68–90 (LAAL…KLVH).

Its subcellular location is the cell membrane. This is an uncharacterized protein from Archaeoglobus fulgidus (strain ATCC 49558 / DSM 4304 / JCM 9628 / NBRC 100126 / VC-16).